Reading from the N-terminus, the 921-residue chain is MDKTYSPEAIEKALYKKWESHHYFQPRGEGKRFCIMLPPPNVTGSLHMGHGFQHTIMDALTRYHRMLGDKTLWQPGTDHAGISTQLVVERQLEAQGVSRKDLTREQFLDKVWQWKEESGNTITQQMRRLGASVDWSRERFTMDEGLSAAVQKVFVQLYEEGLIYRGTRLVNWDPKLGTAVSDLEVLSEEEDGFLWHIRYPVVDSEEFLIVATTRPETLLGDCAVAIHPDDSRFRHLIGKQVHLPLCDRTIPVIADDYVDKEFGSGCVKITPAHDFNDHEVGKRHQLPQINILTKKGTINKNAPLKYQGMDRFVAREQIIKDLEKEGLLAKTEPHKLKVPRGEKSNVIIEPLLTDQWYVKTKPLAEPAIAAVKKGDIRFIPETWDKTYFQWMDNIEDWCISRQLWWGHRIPAWYDNHGNIYVGYSENDVRFKHKIDQSTPLKQDEDVLDTWFSSALWPFSTLGWPERTPELEQFYPTSVLVTGFDIIFFWVARMIMMGLKFTGKIPFKEVFITGLIRDSEGHKMSKSKGNVLDPLDIVDGIDLDSLIAKRTSNLMLNSVRDRITKATRKEFPEGISAYGTDALRFTYCSLASTGRNVRFDLGRVEGYRNFCNKLWNAARYVLLNTDEEQIDFGDGAFQYSPADQWILSRLQNTVSKVHHYFETYRFDLLANTLYEFVWHEYCDWYLELSKPILQDDQALSAMKRGTRRTLIHVLDQILKLLHPLMPFITEEIWQKTTKFTSENGISIMLSTYPKVNEEFINPAIEEELDWLKSAIQSLRTIRSEMSISPAKLIPLYIRNITPELKERIAKYEKILKTLSKIDKINYLAPDEKVPVSATAVLGEIELLIPMADLIDKEAELSRLNKELAKLNKDIELAQGKLNNPKFTDKAPEEIIAKEKDKLAQAQVAKDKLLQHKNRIESL.

Residues 40–50 (PNVTGSLHMGH) carry the 'HIGH' region motif. Residues 522–526 (KMSKS) carry the 'KMSKS' region motif. Lysine 525 contacts ATP. Residues 849-921 (MADLIDKEAE…LQHKNRIESL (73 aa)) adopt a coiled-coil conformation.

The protein belongs to the class-I aminoacyl-tRNA synthetase family. ValS type 1 subfamily. As to quaternary structure, monomer.

The protein localises to the cytoplasm. The enzyme catalyses tRNA(Val) + L-valine + ATP = L-valyl-tRNA(Val) + AMP + diphosphate. Functionally, catalyzes the attachment of valine to tRNA(Val). As ValRS can inadvertently accommodate and process structurally similar amino acids such as threonine, to avoid such errors, it has a 'posttransfer' editing activity that hydrolyzes mischarged Thr-tRNA(Val) in a tRNA-dependent manner. In Legionella pneumophila (strain Paris), this protein is Valine--tRNA ligase.